The chain runs to 153 residues: Protein ElaA (153 aa).

The N-acetyltransferase domain maps to 7–151 (LHHSELSVSQ…PHIGMAREVI (145 aa)).

Belongs to the UPF0039 (ElaA) family.

In Escherichia coli (strain K12), this protein is Protein ElaA (elaA).